A 339-amino-acid polypeptide reads, in one-letter code: Lipoyl synthase (339 aa).

The tract at residues 13-35 (RPKLDAPARPRHPEKAHRPDTAI) is disordered. [4Fe-4S] cluster contacts are provided by C68, C73, C79, C94, C98, C101, and S307. Residues 80–296 (WEKRHATFMI…ETTAYAKGFL (217 aa)) form the Radical SAM core domain.

This sequence belongs to the radical SAM superfamily. Lipoyl synthase family. It depends on [4Fe-4S] cluster as a cofactor.

It is found in the cytoplasm. It catalyses the reaction [[Fe-S] cluster scaffold protein carrying a second [4Fe-4S](2+) cluster] + N(6)-octanoyl-L-lysyl-[protein] + 2 oxidized [2Fe-2S]-[ferredoxin] + 2 S-adenosyl-L-methionine + 4 H(+) = [[Fe-S] cluster scaffold protein] + N(6)-[(R)-dihydrolipoyl]-L-lysyl-[protein] + 4 Fe(3+) + 2 hydrogen sulfide + 2 5'-deoxyadenosine + 2 L-methionine + 2 reduced [2Fe-2S]-[ferredoxin]. It participates in protein modification; protein lipoylation via endogenous pathway; protein N(6)-(lipoyl)lysine from octanoyl-[acyl-carrier-protein]: step 2/2. Its function is as follows. Catalyzes the radical-mediated insertion of two sulfur atoms into the C-6 and C-8 positions of the octanoyl moiety bound to the lipoyl domains of lipoate-dependent enzymes, thereby converting the octanoylated domains into lipoylated derivatives. This Methylorubrum extorquens (strain CM4 / NCIMB 13688) (Methylobacterium extorquens) protein is Lipoyl synthase.